A 372-amino-acid polypeptide reads, in one-letter code: 4-hydroxy-3-methylbut-2-en-1-yl diphosphate synthase (flavodoxin) (372 aa).

[4Fe-4S] cluster contacts are provided by cysteine 270, cysteine 273, cysteine 305, and glutamate 312.

This sequence belongs to the IspG family. Requires [4Fe-4S] cluster as cofactor.

The enzyme catalyses (2E)-4-hydroxy-3-methylbut-2-enyl diphosphate + oxidized [flavodoxin] + H2O + 2 H(+) = 2-C-methyl-D-erythritol 2,4-cyclic diphosphate + reduced [flavodoxin]. The protein operates within isoprenoid biosynthesis; isopentenyl diphosphate biosynthesis via DXP pathway; isopentenyl diphosphate from 1-deoxy-D-xylulose 5-phosphate: step 5/6. In terms of biological role, converts 2C-methyl-D-erythritol 2,4-cyclodiphosphate (ME-2,4cPP) into 1-hydroxy-2-methyl-2-(E)-butenyl 4-diphosphate. The sequence is that of 4-hydroxy-3-methylbut-2-en-1-yl diphosphate synthase (flavodoxin) from Enterobacter sp. (strain 638).